The following is a 239-amino-acid chain: Ribosomal RNA small subunit methyltransferase G (239 aa).

Residues Gly77, Phe82, Ala128–Glu129, and Arg146 contribute to the S-adenosyl-L-methionine site. The segment at Asp215–Lys239 is disordered.

This sequence belongs to the methyltransferase superfamily. RNA methyltransferase RsmG family.

The protein localises to the cytoplasm. Specifically methylates the N7 position of guanine in position 535 of 16S rRNA. The sequence is that of Ribosomal RNA small subunit methyltransferase G from Staphylococcus saprophyticus subsp. saprophyticus (strain ATCC 15305 / DSM 20229 / NCIMB 8711 / NCTC 7292 / S-41).